A 569-amino-acid polypeptide reads, in one-letter code: Proline--tRNA ligase (569 aa).

The protein belongs to the class-II aminoacyl-tRNA synthetase family. ProS type 1 subfamily. As to quaternary structure, homodimer.

It is found in the cytoplasm. The catalysed reaction is tRNA(Pro) + L-proline + ATP = L-prolyl-tRNA(Pro) + AMP + diphosphate. Its function is as follows. Catalyzes the attachment of proline to tRNA(Pro) in a two-step reaction: proline is first activated by ATP to form Pro-AMP and then transferred to the acceptor end of tRNA(Pro). As ProRS can inadvertently accommodate and process non-cognate amino acids such as alanine and cysteine, to avoid such errors it has two additional distinct editing activities against alanine. One activity is designated as 'pretransfer' editing and involves the tRNA(Pro)-independent hydrolysis of activated Ala-AMP. The other activity is designated 'posttransfer' editing and involves deacylation of mischarged Ala-tRNA(Pro). The misacylated Cys-tRNA(Pro) is not edited by ProRS. In Campylobacter hominis (strain ATCC BAA-381 / DSM 21671 / CCUG 45161 / LMG 19568 / NCTC 13146 / CH001A), this protein is Proline--tRNA ligase.